Here is a 245-residue protein sequence, read N- to C-terminus: 1-(5-phosphoribosyl)-5-[(5-phosphoribosylamino)methylideneamino] imidazole-4-carboxamide isomerase (245 aa).

Catalysis depends on aspartate 8, which acts as the Proton acceptor. Catalysis depends on aspartate 131, which acts as the Proton donor.

It belongs to the HisA/HisF family.

The protein localises to the cytoplasm. It carries out the reaction 1-(5-phospho-beta-D-ribosyl)-5-[(5-phospho-beta-D-ribosylamino)methylideneamino]imidazole-4-carboxamide = 5-[(5-phospho-1-deoxy-D-ribulos-1-ylimino)methylamino]-1-(5-phospho-beta-D-ribosyl)imidazole-4-carboxamide. The protein operates within amino-acid biosynthesis; L-histidine biosynthesis; L-histidine from 5-phospho-alpha-D-ribose 1-diphosphate: step 4/9. The protein is 1-(5-phosphoribosyl)-5-[(5-phosphoribosylamino)methylideneamino] imidazole-4-carboxamide isomerase of Neisseria meningitidis serogroup C / serotype 2a (strain ATCC 700532 / DSM 15464 / FAM18).